The primary structure comprises 420 residues: 2',3'-cyclic-nucleotide 3'-phosphodiesterase (420 aa).

Serine 9 carries the post-translational modification Phosphoserine. Tyrosine 110 is subject to Phosphotyrosine. A phosphoserine mark is found at serine 169, serine 227, and serine 239. Catalysis depends on histidine 250, which acts as the Proton acceptor. A substrate-binding site is contributed by threonine 252. Threonine 262 carries the post-translational modification Phosphothreonine. Residue histidine 329 is the Proton donor of the active site. Residue threonine 331 participates in substrate binding. Position 358 is a phosphoserine (serine 358). At cysteine 417 the chain carries Cysteine methyl ester. Cysteine 417 carries the S-farnesyl cysteine lipid modification. A propeptide spans threonine 418–isoleucine 420 (removed in mature form).

It belongs to the 2H phosphoesterase superfamily. CNPase family. As to quaternary structure, exists as monomers and homodimers.

It localises to the membrane. It is found in the melanosome. The catalysed reaction is a nucleoside 2',3'-cyclic phosphate + H2O = a nucleoside 2'-phosphate + H(+). Functionally, catalyzes the formation of 2'-nucleotide products from 2',3'-cyclic substrates. May participate in RNA metabolism in the myelinating cell, CNP is the third most abundant protein in central nervous system myelin. This chain is 2',3'-cyclic-nucleotide 3'-phosphodiesterase, found in Rattus norvegicus (Rat).